A 305-amino-acid polypeptide reads, in one-letter code: Tyrosine recombinase XerC (305 aa).

The Core-binding (CB) domain occupies 1–93 (MVLDGFAAYF…AWRQYCAWLV (93 aa)). The 181-residue stretch at 114–294 (RVPKALPQEW…DFDHIARLYD (181 aa)) folds into the Tyr recombinase domain. Residues Arg155, Lys179, His246, Arg249, and His272 contribute to the active site. The O-(3'-phospho-DNA)-tyrosine intermediate role is filled by Tyr281.

It belongs to the 'phage' integrase family. XerC subfamily. Forms a cyclic heterotetrameric complex composed of two molecules of XerC and two molecules of XerD.

The protein resides in the cytoplasm. Its function is as follows. Site-specific tyrosine recombinase, which acts by catalyzing the cutting and rejoining of the recombining DNA molecules. The XerC-XerD complex is essential to convert dimers of the bacterial chromosome into monomers to permit their segregation at cell division. It also contributes to the segregational stability of plasmids. The chain is Tyrosine recombinase XerC from Neisseria gonorrhoeae (strain ATCC 700825 / FA 1090).